The chain runs to 279 residues: Large ribosomal subunit protein uL2 (279 aa).

The disordered stretch occupies residues 223–279 (VAMNPIDHPHGGGEGRTSGGRHPVTPWGKGTKGTRTRSNKSTDKYILRSRHAKKKGR). A compositionally biased stretch (basic residues) spans 269–279 (LRSRHAKKKGR).

Belongs to the universal ribosomal protein uL2 family. Part of the 50S ribosomal subunit. Forms a bridge to the 30S subunit in the 70S ribosome.

Functionally, one of the primary rRNA binding proteins. Required for association of the 30S and 50S subunits to form the 70S ribosome, for tRNA binding and peptide bond formation. It has been suggested to have peptidyltransferase activity; this is somewhat controversial. Makes several contacts with the 16S rRNA in the 70S ribosome. This chain is Large ribosomal subunit protein uL2, found in Paracoccus denitrificans (strain Pd 1222).